A 95-amino-acid polypeptide reads, in one-letter code: Aspartyl/glutamyl-tRNA(Asn/Gln) amidotransferase subunit C (95 aa).

Belongs to the GatC family. Heterotrimer of A, B and C subunits.

It carries out the reaction L-glutamyl-tRNA(Gln) + L-glutamine + ATP + H2O = L-glutaminyl-tRNA(Gln) + L-glutamate + ADP + phosphate + H(+). The enzyme catalyses L-aspartyl-tRNA(Asn) + L-glutamine + ATP + H2O = L-asparaginyl-tRNA(Asn) + L-glutamate + ADP + phosphate + 2 H(+). In terms of biological role, allows the formation of correctly charged Asn-tRNA(Asn) or Gln-tRNA(Gln) through the transamidation of misacylated Asp-tRNA(Asn) or Glu-tRNA(Gln) in organisms which lack either or both of asparaginyl-tRNA or glutaminyl-tRNA synthetases. The reaction takes place in the presence of glutamine and ATP through an activated phospho-Asp-tRNA(Asn) or phospho-Glu-tRNA(Gln). The sequence is that of Aspartyl/glutamyl-tRNA(Asn/Gln) amidotransferase subunit C from Magnetococcus marinus (strain ATCC BAA-1437 / JCM 17883 / MC-1).